Reading from the N-terminus, the 849-residue chain is Trehalose-phosphatase (849 aa).

The segment at 1–558 is glycosyltransferase; sequence MPSGAQGNTQ…VKALESHMTT (558 aa).

It in the N-terminal section; belongs to the glycosyltransferase 20 family. The protein in the C-terminal section; belongs to the trehalose phosphatase family. Requires Mg(2+) as cofactor.

It is found in the cytoplasm. The protein resides in the nucleus. It carries out the reaction alpha,alpha-trehalose 6-phosphate + H2O = alpha,alpha-trehalose + phosphate. The protein operates within carbohydrate biosynthesis. In terms of biological role, phosphatase catalytic subunit of the trehalose synthase complex that catalyzes the production of trehalose from glucose-6-phosphate and UDP-glucose in a two step process. In Schizosaccharomyces pombe (strain 972 / ATCC 24843) (Fission yeast), this protein is Trehalose-phosphatase (tps2).